A 195-amino-acid polypeptide reads, in one-letter code: Imidazoleglycerol-phosphate dehydratase (195 aa).

It belongs to the imidazoleglycerol-phosphate dehydratase family.

The protein localises to the cytoplasm. It carries out the reaction D-erythro-1-(imidazol-4-yl)glycerol 3-phosphate = 3-(imidazol-4-yl)-2-oxopropyl phosphate + H2O. Its pathway is amino-acid biosynthesis; L-histidine biosynthesis; L-histidine from 5-phospho-alpha-D-ribose 1-diphosphate: step 6/9. This Deinococcus radiodurans (strain ATCC 13939 / DSM 20539 / JCM 16871 / CCUG 27074 / LMG 4051 / NBRC 15346 / NCIMB 9279 / VKM B-1422 / R1) protein is Imidazoleglycerol-phosphate dehydratase.